We begin with the raw amino-acid sequence, 264 residues long: S-adenosylmethionine decarboxylase proenzyme (264 aa).

The active-site Schiff-base intermediate with substrate; via pyruvic acid is serine 113. The residue at position 113 (serine 113) is a Pyruvic acid (Ser); by autocatalysis. Residue histidine 118 is the Proton acceptor; for processing activity of the active site. Residue cysteine 141 is the Proton donor; for catalytic activity of the active site.

It belongs to the prokaryotic AdoMetDC family. Type 2 subfamily. As to quaternary structure, heterooctamer of four alpha and four beta chains arranged as a tetramer of alpha/beta heterodimers. The cofactor is pyruvate. Is synthesized initially as an inactive proenzyme. Formation of the active enzyme involves a self-maturation process in which the active site pyruvoyl group is generated from an internal serine residue via an autocatalytic post-translational modification. Two non-identical subunits are generated from the proenzyme in this reaction, and the pyruvate is formed at the N-terminus of the alpha chain, which is derived from the carboxyl end of the proenzyme. The post-translation cleavage follows an unusual pathway, termed non-hydrolytic serinolysis, in which the side chain hydroxyl group of the serine supplies its oxygen atom to form the C-terminus of the beta chain, while the remainder of the serine residue undergoes an oxidative deamination to produce ammonia and the pyruvoyl group blocking the N-terminus of the alpha chain.

The catalysed reaction is S-adenosyl-L-methionine + H(+) = S-adenosyl 3-(methylsulfanyl)propylamine + CO2. The protein operates within amine and polyamine biosynthesis; S-adenosylmethioninamine biosynthesis; S-adenosylmethioninamine from S-adenosyl-L-methionine: step 1/1. Its function is as follows. Catalyzes the decarboxylation of S-adenosylmethionine to S-adenosylmethioninamine (dcAdoMet), the propylamine donor required for the synthesis of the polyamines spermine and spermidine from the diamine putrescine. The polypeptide is S-adenosylmethionine decarboxylase proenzyme (Pseudomonas paraeruginosa (strain DSM 24068 / PA7) (Pseudomonas aeruginosa (strain PA7))).